We begin with the raw amino-acid sequence, 680 residues long: Coiled-coil domain-containing protein 138 (680 aa).

Thr63 bears the Phosphothreonine mark. Ser64 is subject to Phosphoserine. Positions 260-339 (KEQHGTEIEH…YEFMTVQRLK (80 aa)) form a coiled coil. The tract at residues 390-410 (EPEEPGVDGGKPPAKPSQRSD) is disordered. At Ser484 the chain carries Phosphoserine.

The polypeptide is Coiled-coil domain-containing protein 138 (Ccdc138) (Mus musculus (Mouse)).